The primary structure comprises 835 residues: Protein translocase subunit SecA (835 aa).

Residues Gln85, 103-107 (GEGKT), and Asp492 contribute to the ATP site. Residues 788-807 (VQGEAVHPSSDGEEAKKKPV) are disordered. Cys819, Cys821, Cys830, and Cys831 together coordinate Zn(2+).

This sequence belongs to the SecA family. In terms of assembly, monomer and homodimer. Part of the essential Sec protein translocation apparatus which comprises SecA, SecYEG and auxiliary proteins SecDF. Other proteins may also be involved. Requires Zn(2+) as cofactor.

It localises to the cell membrane. The protein localises to the cytoplasm. The enzyme catalyses ATP + H2O + cellular proteinSide 1 = ADP + phosphate + cellular proteinSide 2.. In terms of biological role, part of the Sec protein translocase complex. Interacts with the SecYEG preprotein conducting channel. Has a central role in coupling the hydrolysis of ATP to the transfer of proteins into and across the cell membrane, serving as an ATP-driven molecular motor driving the stepwise translocation of polypeptide chains across the membrane. This Bacillus cereus (strain ATCC 10987 / NRS 248) protein is Protein translocase subunit SecA.